The following is an 812-amino-acid chain: DNA translocase FtsK 1 (812 aa).

The segment covering 1 to 11 (MTEKSHKKTAK) has biased composition (basic residues). Positions 1-36 (MTEKSHKKTAKGRAGSPSPTSARNKKADNGARGNKV) are disordered. Over residues 25-36 (KKADNGARGNKV) the composition is skewed to basic and acidic residues. 5 helical membrane passes run 63 to 83 (IGDALWLMGLAATLYLVISLI), 116 to 136 (VGYYLFGWSFWWWIAAACVML), 156 to 176 (IAAAALFVLTVFSPVLEYFVL), 184 to 204 (LPVGAGGMVGIRVGAVFAWLL), and 210 to 230 (LLIILVVLLLSLSLLVQISWL). Over 231–812 (EFLNGAGRAV…RKILAHKDHL (582 aa)) the chain is Cytoplasmic. The FtsK domain occupies 461–670 (GTPVVGDLAK…FTVQSKIDSR (210 aa)). 481-486 (GSGKSV) is an ATP binding site.

It belongs to the FtsK/SpoIIIE/SftA family. Homohexamer. Forms a ring that surrounds DNA.

It localises to the cell inner membrane. Functionally, essential cell division protein that coordinates cell division and chromosome segregation. The N-terminus is involved in assembly of the cell-division machinery. The C-terminus functions as a DNA motor that moves dsDNA in an ATP-dependent manner towards the dif recombination site, which is located within the replication terminus region. Translocation stops specifically at Xer-dif sites, where FtsK interacts with the Xer recombinase, allowing activation of chromosome unlinking by recombination. FtsK orienting polar sequences (KOPS) guide the direction of DNA translocation. FtsK can remove proteins from DNA as it translocates, but translocation stops specifically at XerCD-dif site, thereby preventing removal of XerC and XerD from dif. The chain is DNA translocase FtsK 1 (ftsK1) from Neisseria meningitidis serogroup A / serotype 4A (strain DSM 15465 / Z2491).